The sequence spans 151 residues: Deoxyuridine 5'-triphosphate nucleotidohydrolase (151 aa).

Substrate contacts are provided by residues 69–71 (RSG), Asn-82, 86–88 (LID), and Met-96.

It belongs to the dUTPase family. The cofactor is Mg(2+).

It catalyses the reaction dUTP + H2O = dUMP + diphosphate + H(+). The protein operates within pyrimidine metabolism; dUMP biosynthesis; dUMP from dCTP (dUTP route): step 2/2. In terms of biological role, this enzyme is involved in nucleotide metabolism: it produces dUMP, the immediate precursor of thymidine nucleotides and it decreases the intracellular concentration of dUTP so that uracil cannot be incorporated into DNA. This chain is Deoxyuridine 5'-triphosphate nucleotidohydrolase, found in Blochmanniella floridana.